Consider the following 185-residue polypeptide: Large ribosomal subunit protein uL6 (185 aa).

It belongs to the universal ribosomal protein uL6 family. Part of the 50S ribosomal subunit.

In terms of biological role, this protein binds to the 23S rRNA, and is important in its secondary structure. It is located near the subunit interface in the base of the L7/L12 stalk, and near the tRNA binding site of the peptidyltransferase center. This chain is Large ribosomal subunit protein uL6, found in Deinococcus deserti (strain DSM 17065 / CIP 109153 / LMG 22923 / VCD115).